The primary structure comprises 57 residues: UPF0391 membrane protein RPE_2138 (57 aa).

A run of 2 helical transmembrane segments spans residues 4–24 (WVVTFLVVALIAGILGFGGIA) and 30–50 (IAKIIFFIAVVLFLVSAVIGL).

It belongs to the UPF0391 family.

It is found in the cell membrane. This Rhodopseudomonas palustris (strain BisA53) protein is UPF0391 membrane protein RPE_2138.